Consider the following 151-residue polypeptide: MNPQRKKRLFLILGLLAGVAVAVGFALSALQQNINLFYTPTQIANGEAPLDTRIRAGGMVEKGSLQRSGDSLDVRFVVTDFNKSVPITYRGILPDLFREGQGIVALGKLNAEGVVVADEVLAKHDEKYMPPEVTKALKESGQAASGAEAKP.

The Cytoplasmic portion of the chain corresponds to 1 to 8 (MNPQRKKR). Residues 9 to 29 (LFLILGLLAGVAVAVGFALSA) traverse the membrane as a helical; Signal-anchor for type II membrane protein segment. Topologically, residues 30–151 (LQQNINLFYT…QAASGAEAKP (122 aa)) are periplasmic. Heme contacts are provided by histidine 124 and tyrosine 128.

Belongs to the CcmE/CycJ family.

The protein resides in the cell inner membrane. Functionally, heme chaperone required for the biogenesis of c-type cytochromes. Transiently binds heme delivered by CcmC and transfers the heme to apo-cytochromes in a process facilitated by CcmF and CcmH. The protein is Cytochrome c-type biogenesis protein CcmE of Pseudomonas putida (strain W619).